Consider the following 417-residue polypeptide: Serine hydroxymethyltransferase (417 aa).

(6S)-5,6,7,8-tetrahydrofolate contacts are provided by residues leucine 121 and 125–127 (GHL). At lysine 230 the chain carries N6-(pyridoxal phosphate)lysine. 355–357 (SPF) serves as a coordination point for (6S)-5,6,7,8-tetrahydrofolate.

The protein belongs to the SHMT family. As to quaternary structure, homodimer. Pyridoxal 5'-phosphate serves as cofactor.

The protein resides in the cytoplasm. It carries out the reaction (6R)-5,10-methylene-5,6,7,8-tetrahydrofolate + glycine + H2O = (6S)-5,6,7,8-tetrahydrofolate + L-serine. It participates in one-carbon metabolism; tetrahydrofolate interconversion. It functions in the pathway amino-acid biosynthesis; glycine biosynthesis; glycine from L-serine: step 1/1. Functionally, catalyzes the reversible interconversion of serine and glycine with tetrahydrofolate (THF) serving as the one-carbon carrier. This reaction serves as the major source of one-carbon groups required for the biosynthesis of purines, thymidylate, methionine, and other important biomolecules. Also exhibits THF-independent aldolase activity toward beta-hydroxyamino acids, producing glycine and aldehydes, via a retro-aldol mechanism. The chain is Serine hydroxymethyltransferase from Legionella pneumophila (strain Corby).